The sequence spans 122 residues: Piercer of microtubule wall 2 protein (122 aa).

The segment covering 1–23 (MARETDCDLDKKTSLTSDAEMRP) has biased composition (basic and acidic residues). Disordered stretches follow at residues 1–26 (MARETDCDLDKKTSLTSDAEMRPEPP) and 99–122 (QNNSLNVGPDRTRTIDSPNYQHTL). The span at 113 to 122 (IDSPNYQHTL) shows a compositional bias: polar residues.

It belongs to the PIERCE2 family. As to quaternary structure, microtubule inner protein component of sperm flagellar doublet microtubules. Interacts with CFAP53, ODAD1 and ODAD3; the interactions link the outer dynein arms docking complex (ODA-DC) to the internal microtubule inner proteins (MIP) in cilium axoneme.

It is found in the cytoplasm. It localises to the cytoskeleton. The protein resides in the cilium axoneme. Its subcellular location is the flagellum axoneme. In terms of biological role, microtubule inner protein involved in the attachment of outer dynein arms (ODAs) to dynein-decorated doublet microtubules (DMTs) in cilia axoneme, which is required for motile cilia beating. The polypeptide is Piercer of microtubule wall 2 protein (Mus musculus (Mouse)).